We begin with the raw amino-acid sequence, 117 residues long: Probable non-functional T cell receptor gamma variable (117 aa).

The signal sequence occupies residues 1–20; that stretch reads MRWALAVLLAFLSPASQISS. Residues 21 to 117 enclose the Ig-like domain; the sequence is NLEGRTKSVT…GFYYCATWDR (97 aa). A disulfide bond links Cys-41 and Cys-112. Asn-105 carries an N-linked (GlcNAc...) asparagine glycan.

In terms of assembly, gamma-delta TR is a heterodimer composed of a gamma and delta chain; disulfide-linked. The gamma-delta TR is associated with the transmembrane signaling CD3 coreceptor proteins following the stoichiometry: a single gamma-delta TR heterodimer associates with one CD3D-CD3E heterodimer, one CD3G-CD3E heterodimer and one CD247 homodimer forming a stable octameric structure. Upon activation, gamma-delta TR complex associates with FCER1G to initiate intracellular signaling.

It localises to the cell membrane. Its function is as follows. Probable non-functional open reading frame (ORF) of V region of the variable domain of T cell receptor (TR) gamma chain. Non-functional ORF generally cannot participate in the synthesis of a productive T cell receptor (TR) chain due to altered V-(D)-J or switch recombination and/or splicing site (at mRNA level) and/or conserved amino acid change (protein level). Gamma-delta TRs recognize a variety of self and foreign non-peptide antigens frequently expressed at the epithelial boundaries between the host and external environment, including endogenous lipids presented by MH-like protein CD1D and phosphoantigens presented by butyrophilin-like molecule BTN3A1. Upon antigen recognition induces rapid, innate-like immune responses involved in pathogen clearance and tissue repair. Binding of gamma-delta TR complex to antigen triggers phosphorylation of immunoreceptor tyrosine-based activation motifs (ITAMs) in the CD3 chains by the LCK and FYN kinases, allowing the recruitment, phosphorylation, and activation of ZAP70 that facilitates phosphorylation of the scaffolding proteins LCP2 and LAT. This lead to the formation of a supramolecular signalosome that recruits the phospholipase PLCG1, resulting in calcium mobilization and ERK activation, ultimately leading to T cell expansion and differentiation into effector cells. Gamma-delta TRs are produced through somatic rearrangement of a limited repertoire of variable (V), diversity (D), and joining (J) genes. The potential diversity of gamma-delta TRs is conferred by the unique ability to rearrange (D) genes in tandem and to utilize all three reading frames. The combinatorial diversity is considerably increased by the sequence exonuclease trimming and random nucleotide (N) region additions which occur during the V-(D)-J rearrangements. The protein is Probable non-functional T cell receptor gamma variable of Homo sapiens (Human).